A 569-amino-acid polypeptide reads, in one-letter code: Endo-1,4-beta-xylanase 5 (569 aa).

An N-terminal signal peptide occupies residues 1 to 25; it reads MKNINNGFFLCMLLLLWCFVHSGIS. 3 N-linked (GlcNAc...) asparagine glycosylation sites follow: N197, N261, and N307. The GH10 domain occupies 209–500; the sequence is EQTKPSFLLG…NTATGDVIDK (292 aa). Catalysis depends on E332, which acts as the Proton donor. An N-linked (GlcNAc...) asparagine glycan is attached at N346. E439 functions as the Nucleophile in the catalytic mechanism. Residues N490, N536, and N544 are each glycosylated (N-linked (GlcNAc...) asparagine).

It belongs to the glycosyl hydrolase 10 (cellulase F) family.

The catalysed reaction is Endohydrolysis of (1-&gt;4)-beta-D-xylosidic linkages in xylans.. It participates in glycan degradation; xylan degradation. Its function is as follows. Binds to and hydrolyzes insoluble and soluble xylan substrates. The chain is Endo-1,4-beta-xylanase 5 from Arabidopsis thaliana (Mouse-ear cress).